We begin with the raw amino-acid sequence, 441 residues long: POC1 centriolar protein homolog A (441 aa).

7 WD repeats span residues glycine 16–arginine 55, glycine 58–valine 97, alanine 100–serine 139, glutamine 142–serine 181, glutamate 184–histidine 223, valine 226–threonine 265, and glycine 268–alanine 307. Residues aspartate 323–aspartate 380 form a disordered region. Composition is skewed to basic and acidic residues over residues alanine 331–alanine 340, leucine 348–serine 361, and isoleucine 371–aspartate 380. Positions leucine 400 to alanine 427 form a coiled coil.

It belongs to the WD repeat POC1 family. In terms of assembly, interacts with pat.

It is found in the cytoplasm. The protein localises to the cytoskeleton. In terms of biological role, may play an important role in centriole assembly and/or stability and ciliogenesis. The polypeptide is POC1 centriolar protein homolog A (poc1a) (Xenopus tropicalis (Western clawed frog)).